The following is a 340-amino-acid chain: N-acetyl-gamma-glutamyl-phosphate reductase (340 aa).

The active site involves Cys-146.

It belongs to the NAGSA dehydrogenase family. Type 1 subfamily.

The protein localises to the cytoplasm. It carries out the reaction N-acetyl-L-glutamate 5-semialdehyde + phosphate + NADP(+) = N-acetyl-L-glutamyl 5-phosphate + NADPH + H(+). Its pathway is amino-acid biosynthesis; L-arginine biosynthesis; N(2)-acetyl-L-ornithine from L-glutamate: step 3/4. In terms of biological role, catalyzes the NADPH-dependent reduction of N-acetyl-5-glutamyl phosphate to yield N-acetyl-L-glutamate 5-semialdehyde. This Streptococcus sanguinis (strain SK36) protein is N-acetyl-gamma-glutamyl-phosphate reductase.